The following is an 85-amino-acid chain: Small ribosomal subunit protein bS16c (85 aa).

It belongs to the bacterial ribosomal protein bS16 family.

It is found in the plastid. It localises to the chloroplast. The protein is Small ribosomal subunit protein bS16c of Saccharum hybrid (Sugarcane).